The chain runs to 439 residues: SH3 domain-containing protein 1 (439 aa).

One can recognise a BAR domain in the interval 32 to 263; that stretch reads DAVVVDEEEL…MIAEEEAIGS (232 aa). Positions 277–291 are enriched in polar residues; sequence SLPQQEPNSNSSGEI. A disordered region spans residues 277–362; sequence SLPQQEPNSN…SDDHHNHQLL (86 aa). Residues 318 to 358 show a composition bias toward basic and acidic residues; sequence SPKDEMKSSPQEETKSNHQKEIKSSPQEEIKKSNGSDDHHN. Residues 366–425 enclose the SH3 domain; sequence DSYFLAKVVHPFDAQAPGELSLAVDDYVIVRQVAGTGWSEGEYKGKAGWFPSAYVEKQEK.

Interacts with the auxilin-like protein AUXI1. In terms of tissue distribution, highly expressed in flowers. Detected in seedlings, roots, leaves and stems.

The protein localises to the cytoplasmic vesicle. It is found in the clathrin-coated vesicle. The protein resides in the cell membrane. Its subcellular location is the golgi apparatus. It localises to the trans-Golgi network. The protein localises to the endoplasmic reticulum. In terms of biological role, lipid binding protein bound strongly to phosphatidic acid, phosphatidylinositol-4-phosphate and phosphatidylinositol-4,5-bisphosphate. Binds actin in vitro. Involved in trafficking and modification of clathrin-coated vesicles. The sequence is that of SH3 domain-containing protein 1 (SH3P1) from Arabidopsis thaliana (Mouse-ear cress).